A 410-amino-acid chain; its full sequence is LanC-like protein GCR2 (410 aa).

3 residues coordinate Zn(2+): Cys283, Cys328, and His329.

The protein belongs to the LanC-like protein family. May interact (via C-terminus) with GPA1.

May play a role in abscisic acid (ABA) signaling. This is LanC-like protein GCR2 (GCR2) from Arabidopsis thaliana (Mouse-ear cress).